We begin with the raw amino-acid sequence, 300 residues long: ClpXP adapter protein SpxH (300 aa).

It belongs to the SpxH family. Interacts with Spx.

It is found in the cytoplasm. In terms of biological role, adapter protein required for efficient degradation of Spx by ClpXP under non-stress conditions. Interaction with Spx stabilizes Spx and exposes the C-terminus of Spx for recognition and proteolysis by ClpXP. The sequence is that of ClpXP adapter protein SpxH from Bacillus licheniformis (strain ATCC 14580 / DSM 13 / JCM 2505 / CCUG 7422 / NBRC 12200 / NCIMB 9375 / NCTC 10341 / NRRL NRS-1264 / Gibson 46).